The chain runs to 798 residues: Protocadherin beta-13 (798 aa).

The signal sequence occupies residues 1-28 (MEASGKLICRQRQVLFSFLLLGLSLAGA). Topologically, residues 29-690 (AEPRSYSVVE…AQADLLTVYL (662 aa)) are extracellular. 5 consecutive Cadherin domains span residues 36 to 134 (VVEE…SPVF), 139 to 243 (MLVK…APEF), 248 to 348 (YRVQ…APEV), 353 to 451 (FTSP…APAF), and 456 to 561 (YTLF…SPFV). Asn418 and Asn436 each carry an N-linked (GlcNAc...) asparagine glycan. N-linked (GlcNAc...) asparagine glycosylation is present at Asn567. The Cadherin 6 domain occupies 568–671 (GSAPCTELVP…LVDGFSQPYL (104 aa)). Residues 691-711 (VVALASVSSLFLFSVLLFVAV) traverse the membrane as a helical segment. The Cytoplasmic segment spans residues 712–798 (RLCRRSRAAS…FPNNFGFNIQ (87 aa)).

It is found in the cell membrane. Functionally, potential calcium-dependent cell-adhesion protein. May be involved in the establishment and maintenance of specific neuronal connections in the brain. The chain is Protocadherin beta-13 (PCDHB13) from Homo sapiens (Human).